Here is a 498-residue protein sequence, read N- to C-terminus: ATP synthase subunit beta, chloroplastic (498 aa).

Position 172 to 179 (172 to 179 (GGAGVGKT)) interacts with ATP.

This sequence belongs to the ATPase alpha/beta chains family. As to quaternary structure, F-type ATPases have 2 components, CF(1) - the catalytic core - and CF(0) - the membrane proton channel. CF(1) has five subunits: alpha(3), beta(3), gamma(1), delta(1), epsilon(1). CF(0) has four main subunits: a(1), b(1), b'(1) and c(9-12).

The protein resides in the plastid. The protein localises to the chloroplast thylakoid membrane. The catalysed reaction is ATP + H2O + 4 H(+)(in) = ADP + phosphate + 5 H(+)(out). Its function is as follows. Produces ATP from ADP in the presence of a proton gradient across the membrane. The catalytic sites are hosted primarily by the beta subunits. The chain is ATP synthase subunit beta, chloroplastic from Myristica fragrans (Nutmeg).